Consider the following 329-residue polypeptide: Interleukin-12 subunit beta (329 aa).

The N-terminal stretch at 1–22 (MHPQQLVIAWLSLVLLAPPLMA) is a signal peptide. Residues 23–106 (IWELEKNVYV…LSHSFLLIHK (84 aa)) form the Ig-like C2-type domain. Cysteine 50 and cysteine 90 are oxidised to a cystine. N-linked (GlcNAc...) asparagine glycosylation is found at asparagine 135 and asparagine 223. The Fibronectin type-III domain occupies 238-329 (PPKNLQLKPL…WSNWASVSCS (92 aa)).

This sequence belongs to the IL-12B family. As to quaternary structure, heterodimer with IL12A; disulfide-linked. The heterodimer is known as interleukin IL-12. Heterodimer with IL23A; disulfide-linked. The heterodimer is known as interleukin IL-23. Also secreted as a monomer. Interacts with NBR1; this interaction promotes IL-12 secretion.

The protein resides in the secreted. Functionally, cytokine that can act as a growth factor for activated T and NK cells, enhance the lytic activity of NK/lymphokine-activated killer cells, and stimulate the production of IFN-gamma by resting PBMC. Its function is as follows. Associates with IL23A to form the IL-23 interleukin, a heterodimeric cytokine which functions in innate and adaptive immunity. IL-23 may constitute with IL-17 an acute response to infection in peripheral tissues. IL-23 binds to a heterodimeric receptor complex composed of IL12RB1 and IL23R, activates the Jak-Stat signaling cascade, stimulates memory rather than naive T-cells and promotes production of pro-inflammatory cytokines. IL-23 induces autoimmune inflammation and thus may be responsible for autoimmune inflammatory diseases and may be important for tumorigenesis. The protein is Interleukin-12 subunit beta (IL12B) of Felis catus (Cat).